The chain runs to 81 residues: Sulfur carrier protein TusA (81 aa).

C19 functions as the Cysteine persulfide intermediate in the catalytic mechanism.

This sequence belongs to the sulfur carrier protein TusA family. In terms of assembly, interacts with IscS.

The protein localises to the cytoplasm. It participates in tRNA modification. Functionally, sulfur carrier protein involved in sulfur trafficking in the cell. Part of a sulfur-relay system required for 2-thiolation during synthesis of 2-thiouridine of the modified wobble base 5-methylaminomethyl-2-thiouridine (mnm(5)s(2)U) in tRNA. Interacts with IscS and stimulates its cysteine desulfurase activity. Accepts an activated sulfur from IscS, which is then transferred to TusD, and thus determines the direction of sulfur flow from IscS to 2-thiouridine formation. Also appears to be involved in sulfur transfer for the biosynthesis of molybdopterin. The chain is Sulfur carrier protein TusA from Shigella boydii serotype 18 (strain CDC 3083-94 / BS512).